The following is a 235-amino-acid chain: Large ribosomal subunit protein uL1 (235 aa).

This sequence belongs to the universal ribosomal protein uL1 family. As to quaternary structure, part of the 50S ribosomal subunit.

Binds directly to 23S rRNA. The L1 stalk is quite mobile in the ribosome, and is involved in E site tRNA release. Functionally, protein L1 is also a translational repressor protein, it controls the translation of the L11 operon by binding to its mRNA. In Renibacterium salmoninarum (strain ATCC 33209 / DSM 20767 / JCM 11484 / NBRC 15589 / NCIMB 2235), this protein is Large ribosomal subunit protein uL1.